We begin with the raw amino-acid sequence, 395 residues long: MDPINGSHSGANATISDITNGAYNATDAGEWTSSVMFKLRTCVLLLIVIMAVLGNMLVIVSVMRHRKLRVITNYFVVSLAFADILVAMVVMPFNFSVQFNQGWVFGETICDLWNSSDVYFTSTSILHLCCISVDRYYAIVKPLKYPIKMTKKMAFVMLAATWLSPITISYVPIFMGWYTTTDFLESRRDDQCEFKVNKPYAVISSSISFWIPCTIMIFTYLAIFKEANRQEKALHARAGNAMLMHRHSREVSDKNGALHINATTPTKDRNLLKMKREHKAARTLGIIMGAFILCWLPFFLYYVSTSLCDSCNCPEVVTVIMFWTGYFNSALNPIIYAYFNRDFRNAFKNTLACAFCSFCKRSASDLDAMERLDRRGSAQLRVPIPSRRASDLASL.

At methionine 1 to cysteine 42 the chain is on the extracellular side. 3 N-linked (GlcNAc...) asparagine glycosylation sites follow: asparagine 5, asparagine 12, and asparagine 24. Residues valine 43–methionine 63 traverse the membrane as a helical segment. Over arginine 64–tyrosine 74 the chain is Cytoplasmic. A helical transmembrane segment spans residues phenylalanine 75–phenylalanine 95. At serine 96 to aspartate 117 the chain is on the extracellular side. N-linked (GlcNAc...) asparagine glycosylation is present at asparagine 114. Residues valine 118–valine 140 form a helical membrane-spanning segment. Residues lysine 141 to alanine 154 are Cytoplasmic-facing. A helical transmembrane segment spans residues phenylalanine 155–methionine 175. The Extracellular portion of the chain corresponds to glycine 176–valine 202. A helical membrane pass occupies residues isoleucine 203 to isoleucine 223. At phenylalanine 224–arginine 282 the chain is on the cytoplasmic side. Residues threonine 283–valine 303 traverse the membrane as a helical segment. Over serine 304–glutamate 315 the chain is Extracellular. Residues valine 316–tyrosine 336 traverse the membrane as a helical segment. The Cytoplasmic portion of the chain corresponds to alanine 337 to leucine 395.

This sequence belongs to the G-protein coupled receptor 1 family.

Its subcellular location is the cell membrane. Functionally, autoreceptor for octopamine, which is a neurotransmitter, neurohormone, and neuromodulator in invertebrates. Also acts as a receptor for tyramine, but with much less potency. The activity of this receptor is mediated by G proteins which activate adenylyl cyclase. In Chilo suppressalis (Asiatic rice borer moth), this protein is Octopamine receptor beta-2R.